Here is a 66-residue protein sequence, read N- to C-terminus: Large ribosomal subunit protein bL35 (66 aa).

Residues 1–22 (MAYKLKSHRGAAKRFKKTASGG) form a disordered region.

It belongs to the bacterial ribosomal protein bL35 family.

The protein is Large ribosomal subunit protein bL35 of Pseudoalteromonas translucida (strain TAC 125).